The primary structure comprises 74 residues: Protein krueppel (74 aa).

4 C2H2-type zinc fingers span residues 1 to 4 (ERTH), 10 to 32 (FECS…MRLH), 38 to 60 (YHCT…LRVH), and 66 to 74 (YACELCASR).

This sequence belongs to the krueppel C2H2-type zinc-finger protein family.

It localises to the nucleus. Krueppel is a gap class segmentation protein. The polypeptide is Protein krueppel (Kr) (Euscelis plebejus (Leafhopper)).